The following is a 224-amino-acid chain: MAGGGGYGGASGKVDYVFKVVLIGDSAVGKSQLLARFARDEFSMDSKATIGVEFQTRTLSIEQKSIKAQIWDTAGQERYRAVTSAYYRGAVGAMLVYDMTKRETFEHIPRWLEELRAHADKNIVIILIGNKSDLEDQRAVPTEDAKEFAEKEGLFFLETSALNATNVENSFNTLMTQIYNTVNKKNLASEGDSNNPGSLAGKKILIPGSGQEIPAKTSTCCTSS.

Ala2 bears the N-acetylalanine mark. Gly24–Ser31 contributes to the GTP binding site. The short motif at Ser46–Phe54 is the Effector region element. GTP is bound by residues Asp72 to Gln76, Asn130 to Asp133, and Ser160 to Ala161. 2 S-geranylgeranyl cysteine lipidation sites follow: Cys220 and Cys221.

Belongs to the small GTPase superfamily. Rab family. Interacts with TCTP1. Expressed in roots, stems, leaves and flowers. Expressed in tips of growing root hair cells.

The protein localises to the early endosome membrane. It is found in the golgi apparatus. Its subcellular location is the trans-Golgi network membrane. In terms of biological role, regulator of membrane trafficking. May be required for secretion of cell wall components in cells. The polypeptide is Ras-related protein RABA4b (Arabidopsis thaliana (Mouse-ear cress)).